Consider the following 256-residue polypeptide: Hydroxyacylglutathione hydrolase (256 aa).

Residues His57, His59, Asp61, His62, His115, Asp134, and His172 each coordinate Zn(2+).

Belongs to the metallo-beta-lactamase superfamily. Glyoxalase II family. As to quaternary structure, monomer. The cofactor is Zn(2+).

It carries out the reaction an S-(2-hydroxyacyl)glutathione + H2O = a 2-hydroxy carboxylate + glutathione + H(+). Its pathway is secondary metabolite metabolism; methylglyoxal degradation; (R)-lactate from methylglyoxal: step 2/2. Functionally, thiolesterase that catalyzes the hydrolysis of S-D-lactoyl-glutathione to form glutathione and D-lactic acid. The sequence is that of Hydroxyacylglutathione hydrolase from Maricaulis maris (strain MCS10) (Caulobacter maris).